The primary structure comprises 342 residues: Holliday junction branch migration complex subunit RuvB (342 aa).

A large ATPase domain (RuvB-L) region spans residues 1-185 (MTVKPLRDVT…FPIQERLEYY (185 aa)). ATP is bound by residues L24, R25, G66, K69, T70, S71, 132–134 (EDY), R175, Y185, and R222. T70 is a Mg(2+) binding site. Positions 186 to 256 (GPAELKEIAV…VVDRTLRRLE (71 aa)) are small ATPAse domain (RuvB-S). Positions 259 to 342 (ARGLDAMDRR…RPGGKQGSLV (84 aa)) are head domain (RuvB-H). Residues R314 and R319 each coordinate DNA.

This sequence belongs to the RuvB family. Homohexamer. Forms an RuvA(8)-RuvB(12)-Holliday junction (HJ) complex. HJ DNA is sandwiched between 2 RuvA tetramers; dsDNA enters through RuvA and exits via RuvB. An RuvB hexamer assembles on each DNA strand where it exits the tetramer. Each RuvB hexamer is contacted by two RuvA subunits (via domain III) on 2 adjacent RuvB subunits; this complex drives branch migration. In the full resolvosome a probable DNA-RuvA(4)-RuvB(12)-RuvC(2) complex forms which resolves the HJ.

The protein localises to the cytoplasm. The enzyme catalyses ATP + H2O = ADP + phosphate + H(+). Functionally, the RuvA-RuvB-RuvC complex processes Holliday junction (HJ) DNA during genetic recombination and DNA repair, while the RuvA-RuvB complex plays an important role in the rescue of blocked DNA replication forks via replication fork reversal (RFR). RuvA specifically binds to HJ cruciform DNA, conferring on it an open structure. The RuvB hexamer acts as an ATP-dependent pump, pulling dsDNA into and through the RuvAB complex. RuvB forms 2 homohexamers on either side of HJ DNA bound by 1 or 2 RuvA tetramers; 4 subunits per hexamer contact DNA at a time. Coordinated motions by a converter formed by DNA-disengaged RuvB subunits stimulates ATP hydrolysis and nucleotide exchange. Immobilization of the converter enables RuvB to convert the ATP-contained energy into a lever motion, pulling 2 nucleotides of DNA out of the RuvA tetramer per ATP hydrolyzed, thus driving DNA branch migration. The RuvB motors rotate together with the DNA substrate, which together with the progressing nucleotide cycle form the mechanistic basis for DNA recombination by continuous HJ branch migration. Branch migration allows RuvC to scan DNA until it finds its consensus sequence, where it cleaves and resolves cruciform DNA. This chain is Holliday junction branch migration complex subunit RuvB, found in Anaeromyxobacter sp. (strain K).